Here is a 110-residue protein sequence, read N- to C-terminus: Small ribosomal subunit protein bS16 (110 aa).

A disordered region spans residues 84-110 (KRAPRNNPEKAVPRKERKAAAEAAAKA). Basic and acidic residues predominate over residues 90-103 (NPEKAVPRKERKAA).

This sequence belongs to the bacterial ribosomal protein bS16 family.

The polypeptide is Small ribosomal subunit protein bS16 (Afipia carboxidovorans (strain ATCC 49405 / DSM 1227 / KCTC 32145 / OM5) (Oligotropha carboxidovorans)).